Reading from the N-terminus, the 454-residue chain is Putative serine/threonine-protein phosphatase C27B7.6 (454 aa).

4 residues coordinate Mn(2+): Asp-65, His-67, Asp-93, and Asn-125. The active-site Proton donor is the His-126. Mn(2+) is bound by residues His-174 and His-252. Residues 414–454 (RKKLGMTTSTTPPPPRTPSPDAPLAQSPPIPRSPPSSTENA) are disordered. Over residues 424–447 (TPPPPRTPSPDAPLAQSPPIPRSP) the composition is skewed to pro residues.

Belongs to the PPP phosphatase family. PP-1 subfamily. Requires Mn(2+) as cofactor.

The catalysed reaction is O-phospho-L-seryl-[protein] + H2O = L-seryl-[protein] + phosphate. It catalyses the reaction O-phospho-L-threonyl-[protein] + H2O = L-threonyl-[protein] + phosphate. The sequence is that of Putative serine/threonine-protein phosphatase C27B7.6 from Caenorhabditis elegans.